An 81-amino-acid polypeptide reads, in one-letter code: Large ribosomal subunit protein bL31B (81 aa).

This sequence belongs to the bacterial ribosomal protein bL31 family. Type B subfamily. As to quaternary structure, part of the 50S ribosomal subunit.

This chain is Large ribosomal subunit protein bL31B, found in Borreliella afzelii (strain PKo) (Borrelia afzelii).